Here is a 397-residue protein sequence, read N- to C-terminus: F-box protein At3g49450 (397 aa).

The 50-residue stretch at 26 to 75 (GENSGTLPTDLMVEILSRVPAKSAARFRCVSNDWNSLLRSPYLTNLFLKR) folds into the F-box domain.

The chain is F-box protein At3g49450 from Arabidopsis thaliana (Mouse-ear cress).